A 246-amino-acid polypeptide reads, in one-letter code: Nodulin-25 (246 aa).

An N-terminal signal peptide occupies residues 1–24; that stretch reads MVYSNTYMLLGLGVFVLLSSHVLA.

Its subcellular location is the symbiosome. It localises to the peribacteroid space. Functionally, involved in the development and function of nodules. It might participate in the biological process of symbiotic nitrogen fixation. The sequence is that of Nodulin-25 (NMS-25) from Medicago sativa (Alfalfa).